Here is a 1098-residue protein sequence, read N- to C-terminus: Unconventional myosin-If (1098 aa).

The Myosin motor domain maps to 17-690; it reads SGVDDMVLLP…SLFLLEEVRE (674 aa). 110-117 provides a ligand contact to ATP; the sequence is GESGAGKT. Positions 579 to 589 are actin-binding; that stretch reads PHYIRCIKPNE. An IQ domain is found at 693–722; sequence FDGFARTIQKAWRRHVAVRKYEEMREEASN. The 190-residue stretch at 728–917 folds into the TH1 domain; the sequence is KERRRNSINR…GRTLTVSVGD (190 aa). Disordered stretches follow at residues 913-1009 and 1021-1044; these read VSVG…EFLN and KRSV…THGP. Residues 924–937 show a composition bias toward basic residues; sequence KPTRKGMAKGKPRR. Ser-1023 is modified (phosphoserine). One can recognise an SH3 domain in the interval 1041 to 1098; it reads THGPRCRALYQYVGQDVDELSFNVNEVIEILMEDPSGWWKGRLHGQEGLFPGNYVEKI.

Belongs to the TRAFAC class myosin-kinesin ATPase superfamily. Myosin family.

Its function is as follows. Myosins are actin-based motor molecules with ATPase activity. Unconventional myosins serve in intracellular movements. Their highly divergent tails are presumed to bind to membranous compartments, which would be moved relative to actin filaments. In Homo sapiens (Human), this protein is Unconventional myosin-If (MYO1F).